Consider the following 117-residue polypeptide: Large ribosomal subunit protein uL18 (117 aa).

Belongs to the universal ribosomal protein uL18 family. Part of the 50S ribosomal subunit; part of the 5S rRNA/L5/L18/L25 subcomplex. Contacts the 5S and 23S rRNAs.

In terms of biological role, this is one of the proteins that bind and probably mediate the attachment of the 5S RNA into the large ribosomal subunit, where it forms part of the central protuberance. The sequence is that of Large ribosomal subunit protein uL18 from Methylococcus capsulatus (strain ATCC 33009 / NCIMB 11132 / Bath).